The sequence spans 939 residues: Phosphoenolpyruvate carboxylase (939 aa).

Catalysis depends on residues histidine 151 and lysine 593.

This sequence belongs to the PEPCase type 1 family. The cofactor is Mg(2+).

It catalyses the reaction oxaloacetate + phosphate = phosphoenolpyruvate + hydrogencarbonate. Its function is as follows. Forms oxaloacetate, a four-carbon dicarboxylic acid source for the tricarboxylic acid cycle. In Gloeobacter violaceus (strain ATCC 29082 / PCC 7421), this protein is Phosphoenolpyruvate carboxylase.